Consider the following 42-residue polypeptide: Potassium channel toxin gamma-KTx 1.6 (42 aa).

4 disulfides stabilise this stretch: Cys-5–Cys-23, Cys-11–Cys-34, Cys-20–Cys-39, and Cys-24–Cys-41.

This sequence belongs to the ergtoxin family. Gamma-KTx 1 subfamily. In terms of tissue distribution, expressed by the venom gland.

It localises to the secreted. In terms of biological role, blocks Kv11/ERG potassium channels. The sequence is that of Potassium channel toxin gamma-KTx 1.6 from Centruroides exilicauda (Bark scorpion).